The sequence spans 92 residues: Small ribosomal subunit protein uS19 (92 aa).

This sequence belongs to the universal ribosomal protein uS19 family.

Its function is as follows. Protein S19 forms a complex with S13 that binds strongly to the 16S ribosomal RNA. This is Small ribosomal subunit protein uS19 from Pelobacter propionicus (strain DSM 2379 / NBRC 103807 / OttBd1).